Consider the following 400-residue polypeptide: EARP-interacting protein homolog (400 aa).

Residues 95–114 form a disordered region; sequence NNNSNNTNNNDNTNNNTNNN. Over residues 96 to 114 the composition is skewed to low complexity; sequence NNSNNTNNNDNTNNNTNNN. WD repeat units follow at residues 138–178, 227–267, and 271–311; these read GHTG…NEPT, AHSE…DPVK, and GHNH…SAFN. Residues 314–333 show a composition bias toward low complexity; that stretch reads NNISNSNEQQHSQQPNEQQP. The tract at residues 314–348 is disordered; that stretch reads NNISNSNEQQHSQQPNEQQPQQPPQPVKQKKNKRN. Residues 358–397 form a WD 4 repeat; it reads EHEDSVYNISWSSSNFLFASLSYDGRFVVNNVPKEYSDIL.

The protein belongs to the WD repeat EIPR1 family.

The protein is EARP-interacting protein homolog of Dictyostelium discoideum (Social amoeba).